The chain runs to 119 residues: NADH dehydrogenase [ubiquinone] 1 subunit C2 (119 aa).

The helical transmembrane segment at 56–75 (GLHRQLLYITAFFFAGYYLV) threads the bilayer.

This sequence belongs to the complex I NDUFC2 subunit family. As to quaternary structure, complex I is composed of 45 different subunits. Interacts with TMEM242.

The protein localises to the mitochondrion inner membrane. Functionally, accessory subunit of the mitochondrial membrane respiratory chain NADH dehydrogenase (Complex I), that is believed not to be involved in catalysis but required for the complex assembly. Complex I functions in the transfer of electrons from NADH to the respiratory chain. The immediate electron acceptor for the enzyme is believed to be ubiquinone. The protein is NADH dehydrogenase [ubiquinone] 1 subunit C2 of Pan troglodytes (Chimpanzee).